The sequence spans 392 residues: tRNA (guanine(26)-N(2)/guanine(27)-N(2))-dimethyltransferase (392 aa).

The 374-residue stretch at 2–375 (EIVQEGIAKI…LSFEEVMKKM (374 aa)) folds into the Trm1 methyltransferase domain. S-adenosyl-L-methionine is bound by residues Arg-36, Arg-66, Asp-84, Glu-113, and Ala-114. Residues Cys-247, Cys-250, Cys-266, and Cys-269 each contribute to the Zn(2+) site.

It belongs to the class I-like SAM-binding methyltransferase superfamily. Trm1 family.

The catalysed reaction is guanosine(26)/guanosine(27) in tRNA + 4 S-adenosyl-L-methionine = N(2)-dimethylguanosine(26)/N(2)-dimethylguanosine(27) in tRNA + 4 S-adenosyl-L-homocysteine + 4 H(+). Functionally, dimethylates the guanine residues at position 26 and 27 of one or more tRNAs using S-adenosyl-L-methionine as donor of the methyl groups. This is tRNA (guanine(26)-N(2)/guanine(27)-N(2))-dimethyltransferase from Aquifex aeolicus (strain VF5).